The primary structure comprises 677 residues: Pro-neuregulin-1, membrane-bound isoform (677 aa).

Positions 1–12 are enriched in basic and acidic residues; the sequence is MAEKKKVKEGKG. Disordered stretches follow at residues 1–43 and 78–106; these read MAEK…KEIK and GAKN…ISKA. The Extracellular portion of the chain corresponds to 1–260; the sequence is MAEKKKVKEG…MEAEELYQKR (260 aa). Residues 13–24 show a composition bias toward basic residues; that stretch reads RKGKGKKDRKGK. Residues 37-132 enclose the Ig-like C2-type domain; sequence PKLKEIKTQS…GNDTVTVNVT (96 aa). C57 and C116 form a disulfide bridge. Residues 78-91 are compositionally biased toward basic and acidic residues; sequence GAKNKPDSKPEHIK. N-linked (GlcNAc...) asparagine glycans are attached at residues N124 and N130. Residues 188 to 232 enclose the EGF-like domain; sequence HLIKCSDKEKTYCVNGGECYVLNGITSSNQFMCKCKPGFTGARCT. Cystine bridges form between C192–C206, C200–C220, and C222–C231. A helical transmembrane segment spans residues 261 to 280; that stretch reads VLTITGICIDLLVVGDMCVV. The Cytoplasmic segment spans residues 281–677; it reads DAYCKTKKQR…RKMTCKTLFI (397 aa). The span at 294-315 shows a compositional bias: basic and acidic residues; that stretch reads NDRLRQSLRERNKNITNKDNRP. 5 disordered regions span residues 294 to 326, 350 to 375, 397 to 418, 457 to 479, and 503 to 617; these read NDRL…PRKN, ETSF…PSHS, SVEN…GIGG, VEFK…ESSL, and PPRL…FLSI. The segment covering 351–375 has biased composition (low complexity); that stretch reads TSFSTSHYTSTTHHSTTVTQTPSHS. Positions 397–407 are enriched in polar residues; the sequence is SVENSRHTSPT. Over residues 505–515 the composition is skewed to basic and acidic residues; that stretch reads RLREKRYDRKT. A compositionally biased stretch (basic residues) spans 568 to 578; sequence VNSRRQKRTKP. Positions 591 to 600 are enriched in low complexity; the sequence is DSSSESSTSE.

It belongs to the neuregulin family. In terms of processing, proteolytic cleavage close to the plasma membrane on the external face leads to the release of the soluble growth factor form. Post-translationally, extensive glycosylation precedes the proteolytic cleavage. In terms of tissue distribution, isoform alpha1 is expressed in brain and muscle. Isoform CRD is expressed in brain and spinal cord, but at very low level in muscle.

Its subcellular location is the cell membrane. The protein resides in the secreted. Direct ligand for the ERBB tyrosine kinase receptors. Induces expression of acetylcholine receptor in synaptic nuclei. This Xenopus laevis (African clawed frog) protein is Pro-neuregulin-1, membrane-bound isoform (nrg1).